The sequence spans 175 residues: NADH-quinone oxidoreductase subunit I (175 aa).

4Fe-4S ferredoxin-type domains are found at residues Lys-64–Asp-93 and Ser-110–Glu-139. Positions 73, 76, 79, 83, 119, 122, 125, and 129 each coordinate [4Fe-4S] cluster.

This sequence belongs to the complex I 23 kDa subunit family. NDH-1 is composed of 14 different subunits. Subunits NuoA, H, J, K, L, M, N constitute the membrane sector of the complex. [4Fe-4S] cluster serves as cofactor.

It localises to the cell inner membrane. The enzyme catalyses a quinone + NADH + 5 H(+)(in) = a quinol + NAD(+) + 4 H(+)(out). Its function is as follows. NDH-1 shuttles electrons from NADH, via FMN and iron-sulfur (Fe-S) centers, to quinones in the respiratory chain. The immediate electron acceptor for the enzyme in this species is believed to be ubiquinone. Couples the redox reaction to proton translocation (for every two electrons transferred, four hydrogen ions are translocated across the cytoplasmic membrane), and thus conserves the redox energy in a proton gradient. The protein is NADH-quinone oxidoreductase subunit I of Cytophaga hutchinsonii (strain ATCC 33406 / DSM 1761 / CIP 103989 / NBRC 15051 / NCIMB 9469 / D465).